The following is a 192-amino-acid chain: UPF0301 protein BceJ2315_30870 (192 aa).

Belongs to the UPF0301 (AlgH) family.

This is UPF0301 protein BceJ2315_30870 from Burkholderia cenocepacia (strain ATCC BAA-245 / DSM 16553 / LMG 16656 / NCTC 13227 / J2315 / CF5610) (Burkholderia cepacia (strain J2315)).